The primary structure comprises 925 residues: Serine/threonine-protein kinase SIK2 (925 aa).

In terms of domain architecture, Protein kinase spans 20–271 (YDIEGTLGKG…IAQIKEHKWM (252 aa)). Phosphothreonine is present on Thr-25. Residues 26–34 (LGKGNFAVV) and Lys-49 contribute to the ATP site. An N6-acetyllysine; by EP300 modification is found at Lys-53. Catalysis depends on Asp-142, which acts as the Proton acceptor. Thr-175 is subject to Phosphothreonine. The region spanning 295 to 335 (EFNEQVLRLMHSLGIDQQKTIESLQNKSYNHFAAIYFLLVE) is the UBA domain. Ser-534 carries the phosphoserine modification. Positions 564–586 (ALSSQKREVHNRSPVSFREGRRA) are disordered. Ser-587 carries the phosphoserine modification. Disordered stretches follow at residues 630 to 674 (PNLA…PRQS), 742 to 776 (SSYP…PLSP), and 800 to 895 (QPLP…SSYD). 2 stretches are compositionally biased toward low complexity: residues 648 to 659 (QEEVSQQQESVS) and 742 to 756 (SSYP…LPRQ). Residues 765–774 (APPFSLTQPL) show a composition bias toward polar residues. Residues 808-820 (PRAAPLPTQLQQQ) show a composition bias toward low complexity. Residues 821-833 (QPPPPPPPPPPRQ) show a composition bias toward pro residues.

It belongs to the protein kinase superfamily. CAMK Ser/Thr protein kinase family. SNF1 subfamily. As to quaternary structure, interacts with and phosphorylates TORC2/CRTC2. Mg(2+) is required as a cofactor. Phosphorylated at Thr-175 by STK11/LKB1 in complex with STE20-related adapter-alpha (STRADA) pseudo kinase and CAB39. Phosphorylated at Thr-484 in response to insulin in adipocytes. In terms of processing, acetylation at Lys-53 inhibits kinase activity. Deacetylated by HDAC6.

It localises to the cytoplasm. The protein resides in the endoplasmic reticulum membrane. It catalyses the reaction L-seryl-[protein] + ATP = O-phospho-L-seryl-[protein] + ADP + H(+). The catalysed reaction is L-threonyl-[protein] + ATP = O-phospho-L-threonyl-[protein] + ADP + H(+). With respect to regulation, activated by phosphorylation on Thr-175. Serine/threonine-protein kinase that plays a role in many biological processes such as fatty acid oxidation, autophagy, immune response or glucose metabolism. Phosphorylates 'Ser-794' of IRS1 in insulin-stimulated adipocytes, potentially modulating the efficiency of insulin signal transduction. Inhibits CREB activity by phosphorylating and repressing TORCs, the CREB-specific coactivators. Phosphorylates EP300 and thus inhibits its histone acetyltransferase activity. In turn, regulates the DNA-binding ability of several transcription factors such as PPARA or MLXIPL. Also plays a role in thymic T-cell development. The sequence is that of Serine/threonine-protein kinase SIK2 (SIK2) from Pongo abelii (Sumatran orangutan).